The following is a 475-amino-acid chain: Ribulose bisphosphate carboxylase large chain (475 aa).

Positions 1–2 are excised as a propeptide; sequence MS. N-acetylproline is present on Pro-3. N6,N6,N6-trimethyllysine is present on Lys-14. 2 residues coordinate substrate: Asn-123 and Thr-173. Catalysis depends on Lys-175, which acts as the Proton acceptor. A substrate-binding site is contributed by Lys-177. Residues Lys-201, Asp-203, and Glu-204 each contribute to the Mg(2+) site. Residue Lys-201 is modified to N6-carboxylysine. The Proton acceptor role is filled by His-294. Residues Arg-295, His-327, and Ser-379 each contribute to the substrate site.

This sequence belongs to the RuBisCO large chain family. Type I subfamily. As to quaternary structure, heterohexadecamer of 8 large chains and 8 small chains. It depends on Mg(2+) as a cofactor.

It is found in the plastid. The protein localises to the chloroplast. It carries out the reaction 2 (2R)-3-phosphoglycerate + 2 H(+) = D-ribulose 1,5-bisphosphate + CO2 + H2O. The catalysed reaction is D-ribulose 1,5-bisphosphate + O2 = 2-phosphoglycolate + (2R)-3-phosphoglycerate + 2 H(+). Functionally, ruBisCO catalyzes two reactions: the carboxylation of D-ribulose 1,5-bisphosphate, the primary event in carbon dioxide fixation, as well as the oxidative fragmentation of the pentose substrate in the photorespiration process. Both reactions occur simultaneously and in competition at the same active site. The chain is Ribulose bisphosphate carboxylase large chain from Bazzania trilobata (Greater whipwort).